A 1003-amino-acid chain; its full sequence is NACHT, LRR and PYD domains-containing protein 9B (1003 aa).

The Pyrin domain occupies 1 to 91 (MAGSSGYGLL…SIMAQKKKRH (91 aa)). In terms of domain architecture, NACHT spans 143-465 (VTAIVAGTTG…QDKDICVPVI (323 aa)). 149 to 156 (GTTGEGKT) contributes to the ATP binding site. LRR repeat units follow at residues 749 to 770 (KVKH…SLCE), 778 to 799 (VLQS…HLYE), 806 to 826 (HLSL…NLLC), 835 to 856 (TLKE…EISA), 863 to 883 (NLKT…RQLC), 892 to 913 (NLEC…DLAL), and 920 to 940 (TLNS…VVLC).

Sensor component of NLRP9 inflammasomes. Inflammasomes are supramolecular complexes that assemble in the cytosol in response to pathogens, such as rotavirus, but not encephalomyocarditis virus (EMCV), and play critical roles in innate immunity and inflammation. The core of NLRP9 inflammasomes consists of a signal sensor component (NLRP9), an adapter (ASC/PYCARD), which recruits an effector pro-inflammatory caspase (CASP1). Within the complex, NLRP9 and PYCARD interact via their respective DAPIN/pyrin domains. This interaction initiates speck formation (nucleation) which greatly enhances further addition of soluble PYCARD molecules to the speck in a prion-like polymerization process. Clustered PYCARD nucleates the formation of CASP1 filaments through the interaction of their respective CARD domains, acting as a platform for CASP1 polymerization. CASP1 filament formation increases local enzyme concentration, resulting in trans-autocleavage and activation. Active CASP1 then processes IL1B and IL18 precursors, leading to the release of mature cytokines in the extracellular milieu and inflammatory response. Interacts with DHX9 upon rotavirus infection; this interaction may trigger inflammasome activation and inflammatory response. Predominantly expressed in the intestine, including proximal and distal colon, cecum, ileum, jejunum and duodenum (at protein level). In the ileum, expressed in epithelial cells. Also expressed in oocytes at all follicular stages and in preimplantation embryos (at protein level). Although expression decreases in preimplantation embryos, it is still detectable in blastocyts.

It localises to the cytoplasm. Its subcellular location is the inflammasome. As the sensor component of the NLRP9 inflammasome, plays a crucial role in innate immunity and inflammation. In response to pathogens, including rotavirus, initiates the formation of the inflammasome polymeric complex, made of NLRP9, PYCARD and CASP1. Recruitment of proCASP1 to the inflammasome promotes its activation and CASP1-catalyzed IL1B and IL18 maturation and release in the extracellular milieu. The active cytokines stimulate inflammatory responses. Inflammasomes can also induce pyroptosis, an inflammatory form of programmed cell death. NLRP9 inflammasome activation may be initiated by DHX9 interaction with viral double-stranded RNA (dsRNA), preferentially to short dsRNA segments. The sequence is that of NACHT, LRR and PYD domains-containing protein 9B (Nlrp9b) from Mus musculus (Mouse).